Here is a 171-residue protein sequence, read N- to C-terminus: MMSKVFFDITIGSDTAGRIVMELFDEVTPKTAENFRALCTGEKGVGKAGKPLHFKGSHFHRVITDFMAQGGDFTRGNGTGGESIYGEKFADENFQLKHDRPGLLSMANAGPNTNGSQFFLTFVPCPWLDGKHVVFGEVVEGLEILEQLEANGSQSGQTKQAIVISDCGEIK.

The 164-residue stretch at 6-169 (FFDITIGSDT…QAIVISDCGE (164 aa)) folds into the PPIase cyclophilin-type domain.

The protein belongs to the cyclophilin-type PPIase family.

The catalysed reaction is [protein]-peptidylproline (omega=180) = [protein]-peptidylproline (omega=0). PPIases accelerate the folding of proteins. It catalyzes the cis-trans isomerization of proline imidic peptide bonds in oligopeptides. The protein is Peptidyl-prolyl cis-trans isomerase slr1251 of Synechocystis sp. (strain ATCC 27184 / PCC 6803 / Kazusa).